The primary structure comprises 439 residues: MSAKVASNKEAPLTEDSVSDLSSDGVEAEGVDQTENSGADAMIDSEPATEAGVMKQAFGFIKNHLKVGADMTKLPIPATFVQPISFLTAIQQQSAIFSHLLTSAPYIKEDDQRFLQVLKYHLTWPKMYFPKNPLNPILGEVYECQVQHTDEKTNEVIQGDITHFTAEQISHHPPISCFNFYNDKHKIKFDSKQQITPVFKGKCIRVNMDVKTCITLEREGGVTETYFNDKFTEGYLRLLRWKFEFTGKYNFVCPETGYSAVINFKDKPIIGGKWHDLQIIVSKGTEPIYDIHGTHVDILTITNLKDKTSGVFINYNTMRSEPVIEEPMEQLKENASQKVWKGVAEGFAKKDSRKAGLEKQRIEDLQRKKAKVNLAKDPNFIHKPHYFIHNPNLPADCVKPDYIFKKPVESSTPNLSKVDSSAKIENSIPVDNSIPQTTN.

2 disordered regions span residues 1 to 40 and 409 to 439; these read MSAK…SGAD and ESST…QTTN. 2 stretches are compositionally biased toward polar residues: residues 409–419 and 429–439; these read ESSTPNLSKVD and PVDNSIPQTTN.

It belongs to the OSBP family.

The sequence is that of Oxysterol-binding protein 6 (osbF) from Dictyostelium discoideum (Social amoeba).